The chain runs to 85 residues: Small ribosomal subunit protein uS17 (85 aa).

Belongs to the universal ribosomal protein uS17 family. In terms of assembly, part of the 30S ribosomal subunit.

Its function is as follows. One of the primary rRNA binding proteins, it binds specifically to the 5'-end of 16S ribosomal RNA. This Haemophilus influenzae (strain 86-028NP) protein is Small ribosomal subunit protein uS17.